The sequence spans 353 residues: Abasic site processing protein HMCES (353 aa).

Residue Cys-2 is the Nucleophile of the active site. A Thiazolidine linkage to a ring-opened DNA abasic site modification is found at Cys-2. The active site involves Glu-127. Glycyl lysine isopeptide (Lys-Gly) (interchain with G-Cter in SUMO2) cross-links involve residues Lys-148 and Lys-151. Ser-160 bears the Phosphoserine mark. Glycyl lysine isopeptide (Lys-Gly) (interchain with G-Cter in SUMO2) cross-links involve residues Lys-274 and Lys-275. Residues 292 to 353 form a disordered region; that stretch reads TKSPKKEVPD…DEPVAKRPNS (62 aa). Residue Ser-294 is modified to Phosphoserine. The segment covering 295–307 has biased composition (basic and acidic residues); that stretch reads PKKEVPDSPKKDA. Lys-305 is covalently cross-linked (Glycyl lysine isopeptide (Lys-Gly) (interchain with G-Cter in SUMO2)). A Phosphoserine modification is found at Ser-321. A PIP-box motif is present at residues 332–338; that stretch reads SLLDRWL. The span at 336–353 shows a compositional bias: basic and acidic residues; the sequence is RWLKQEKEDEPVAKRPNS. Glycyl lysine isopeptide (Lys-Gly) (interchain with G-Cter in SUMO2) cross-links involve residues Lys-339 and Lys-342.

Belongs to the SOS response-associated peptidase family. As to quaternary structure, interacts (via PIP-box motif) with PCNA. Ubiquitinated; the covalent HMCES DNA-protein cross-link is ubiquitinated, leading to its degradation by the proteasome.

The protein resides in the chromosome. Formation and reversal of DNA-protein cross-link depends on DNA context. Catalyzes formation of the thiazolidine linkage in presence of abasic sites in single-stranded DNA. Mediates the reversal of the thiazolidine cross-link in presence of double stranded DNA. In terms of biological role, sensor of abasic sites in single-stranded DNA (ssDNA) required to preserve genome integrity by promoting error-free repair of abasic sites. Acts as an enzyme that recognizes and binds abasic sites in ssDNA at replication forks and chemically modifies the lesion by forming a covalent cross-link with DNA: forms a stable thiazolidine linkage between a ring-opened abasic site and the alpha-amino and sulfhydryl substituents of its N-terminal catalytic cysteine residue. Promotes error-free repair by protecting abasic sites from translesion synthesis (TLS) polymerases and endonucleases that are error-prone and would generate mutations and double-strand breaks. The HMCES DNA-protein cross-link is then either reversed or degraded. HMCES is able to catalyze the reversal of its thiazolidine cross-link and cycle between a cross-link and a non-cross-linked state depending on DNA context: mediates self-reversal of the thiazolidine cross-link in double stranded DNA, allowing APEX1 to initiate downstream repair of abasic sites. The HMCES DNA-protein cross-link can also be degraded by the SPRTN metalloprotease following unfolding by the BRIP1/FANCJ helicase. Has preference for ssDNA, but can also accommodate double-stranded DNA with 3' or 5' overhang (dsDNA), and dsDNA-ssDNA 3' junction. Plays a protective role during somatic hypermutation of immunoglobulin genes in B-cells: acts via its ability to form covalent cross-links with abasic sites, thereby limiting the accumulation of deletions in somatic hypermutation target regions. Also involved in class switch recombination (CSR) in B-cells independently of the formation of a DNA-protein cross-link: acts by binding and protecting ssDNA overhangs to promote DNA double-strand break repair through the microhomology-mediated alternative-end-joining (Alt-EJ) pathway. Acts as a protease: mediates autocatalytic processing of its N-terminal methionine in order to expose the catalytic cysteine. The polypeptide is Abasic site processing protein HMCES (Rattus norvegicus (Rat)).